A 570-amino-acid chain; its full sequence is Sulfite reductase [NADPH] hemoprotein beta-component (570 aa).

[4Fe-4S] cluster-binding residues include Cys-434, Cys-440, Cys-479, and Cys-483. Siroheme is bound at residue Cys-483.

Belongs to the nitrite and sulfite reductase 4Fe-4S domain family. Alpha(8)-beta(8). The alpha component is a flavoprotein, the beta component is a hemoprotein. Siroheme serves as cofactor. Requires [4Fe-4S] cluster as cofactor.

It catalyses the reaction hydrogen sulfide + 3 NADP(+) + 3 H2O = sulfite + 3 NADPH + 4 H(+). It participates in sulfur metabolism; hydrogen sulfide biosynthesis; hydrogen sulfide from sulfite (NADPH route): step 1/1. Functionally, component of the sulfite reductase complex that catalyzes the 6-electron reduction of sulfite to sulfide. This is one of several activities required for the biosynthesis of L-cysteine from sulfate. The protein is Sulfite reductase [NADPH] hemoprotein beta-component of Salmonella heidelberg (strain SL476).